We begin with the raw amino-acid sequence, 355 residues long: MSFDLPDIILRPASLLYKNIIRIRNRLYDQQIFHTWHSPLPIVSIGNISAGGTGKTPLVDWIVKYYLSLGCKPAIVSRGYGRNTKGVQLVSDGKTVLMKSNACGDETAMLAWNNRDAIVIVAEKRKDAVTFIIRRFAEAMPDVIILDDAFQHRQIARNLDIVVINEKEPYFRADMIPKGRLREPLINLARADLLVLSKITGGSTTAAISMDLEQTGKPVIKAGIAAGNLVCLSGMFNTAKESPVHAGIKALAFAGIGSPQSFIDTLEGQGIQIVSHRFFRDHESYTAKKIAALRLEADEKKLTLVTTEKDYFRMLGQPELQEILHTLSCCYLKIRPEFTEGEKLLKTMLNAVINR.

49-56 contributes to the ATP binding site; it reads SAGGTGKT.

This sequence belongs to the LpxK family.

The catalysed reaction is a lipid A disaccharide + ATP = a lipid IVA + ADP + H(+). The protein operates within glycolipid biosynthesis; lipid IV(A) biosynthesis; lipid IV(A) from (3R)-3-hydroxytetradecanoyl-[acyl-carrier-protein] and UDP-N-acetyl-alpha-D-glucosamine: step 6/6. In terms of biological role, transfers the gamma-phosphate of ATP to the 4'-position of a tetraacyldisaccharide 1-phosphate intermediate (termed DS-1-P) to form tetraacyldisaccharide 1,4'-bis-phosphate (lipid IVA). This Chlorobium phaeobacteroides (strain DSM 266 / SMG 266 / 2430) protein is Tetraacyldisaccharide 4'-kinase.